We begin with the raw amino-acid sequence, 121 residues long: UPF0344 protein BCA_1194 (121 aa).

The next 4 membrane-spanning stretches (helical) occupy residues 6 to 26, 38 to 58, 65 to 85, and 92 to 112; these read ITAW…YSAG, LMYI…MKTA, WYGL…MVLV, and ATGA…YLGL.

The protein belongs to the UPF0344 family.

The protein localises to the cell membrane. The chain is UPF0344 protein BCA_1194 from Bacillus cereus (strain 03BB102).